We begin with the raw amino-acid sequence, 78 residues long: Large ribosomal subunit protein bL28 (78 aa).

This sequence belongs to the bacterial ribosomal protein bL28 family.

The sequence is that of Large ribosomal subunit protein bL28 from Hydrogenovibrio crunogenus (strain DSM 25203 / XCL-2) (Thiomicrospira crunogena).